The primary structure comprises 78 residues: MLTYHYTLRSSAYRLLALFQVDLRISTLHFAGVLIMDNKKDNISEEEKLPKEKEIGGVKGLEPTRYGDWQHKGKVTDF.

Belongs to the SDHAF4 family.

The protein is UPF0369 protein RF_1112 of Rickettsia felis (strain ATCC VR-1525 / URRWXCal2) (Rickettsia azadi).